A 588-amino-acid polypeptide reads, in one-letter code: Cryptochrome-1 (588 aa).

In terms of domain architecture, Photolyase/cryptochrome alpha/beta spans 3–132 (VNAVHWFRKG…EVIVRISHTL (130 aa)). Residue K11 forms a Glycyl lysine isopeptide (Lys-Gly) (interchain with G-Cter in ubiquitin) linkage. The LIR 1 signature appears at 50-54 (NRWRF). Residue S71 is modified to Phosphoserine; by AMPK. The LIR 2 signature appears at 82-87 (DVFPRL). A Glycyl lysine isopeptide (Lys-Gly) (interchain with G-Cter in ubiquitin) cross-link involves residue K107. The LIR 3 signature appears at 151-156 (KRFQTL). A Glycyl lysine isopeptide (Lys-Gly) (interchain with G-Cter in ubiquitin) cross-link involves residue K159. S247 bears the Phosphoserine; by MAPK mark. S252 serves as a coordination point for FAD. 2 short sequence motifs (LIR) span residues 255-260 (LRFGCL) and 271-276 (DLYKKV). S280 bears the Phosphoserine; by AMPK mark. Residues 285-290 (SLYGQL) carry the LIR 6 motif. Residue Q289 coordinates FAD. A Glycyl lysine isopeptide (Lys-Gly) (interchain with G-Cter in ubiquitin) cross-link involves residue K329. Residues 335-339 (TGFPW) carry the LIR 7 motif. H355 lines the FAD pocket. The required for inhibition of CLOCK-BMAL1-mediated transcription stretch occupies residues 371 to 470 (WISWEEGMKV…LIGVNYPKPM (100 aa)). The LIR 8 motif lies at 379 to 384 (KVFEEL). An FAD-binding site is contributed by 387 to 389 (DAD). 3 short sequence motifs (LIR) span residues 395–400 (GSWMWL), 411–416 (HCYCPV), and 430–435 (RRYLPV). The tract at residues 471–493 (VNHAEASRLNIERMKQIYQQLSR) is interaction with TIMELESS. K485 participates in a covalent cross-link: Glycyl lysine isopeptide (Lys-Gly) (interchain with G-Cter in ubiquitin). Short sequence motifs (LIR) lie at residues 486–491 (QIYQQL) and 492–497 (SRYRGL). The disordered stretch occupies residues 511–588 (GGLMGYAPGE…GPKVQRQSSN (78 aa)). A compositionally biased stretch (polar residues) spans 545-568 (DSQQTNPLKQGRSSMGTGLSSGKR). A Glycyl lysine isopeptide (Lys-Gly) (interchain with G-Cter in ubiquitin) cross-link involves residue K567. Position 570 is a phosphoserine (S570).

This sequence belongs to the DNA photolyase class-1 family. As to quaternary structure, component of the circadian core oscillator, which includes the CRY proteins, CLOCK or NPAS2, BMAL1 or BMAL2, CSNK1D and/or CSNK1E, TIMELESS, and the PER proteins. Interacts directly with TIMELESS. Interacts directly with PER1, PER2 and PER3; interaction with PER2 inhibits its ubiquitination and vice versa. Interacts with FBXL21. Interacts with FBXL3. Interacts with CLOCK-BMAL1 independently of PER2 and DNA. Interacts with HDAC1, HDAC2 and SIN3B. Interacts with nuclear receptors AR, NR1D1, NR3C1/GR, RORA and RORC; the interaction with at least NR3C1/GR is ligand dependent. Interacts with PRKDC. Interacts with the G protein subunit alpha GNAS; the interaction may block GPCR-mediated regulation of cAMP concentrations. Interacts with PRMT5. Interacts with EZH2. Interacts with MYBBP1A, DOCK7, HNRNPU, RPL7A, RPL8 and RPS3. Interacts with PPP5C (via TPR repeats). Interacts with MAP1LC3B. Interacts with CLOCK. Interacts with BMAL1. Interacts weakly with HDAC3; this interaction is enhanced in the presence of FBXL3. Interacts with TRIM28, KCTD5 and DDB1. Interacts with FOXO1. Interacts with DTL and DDB1-CUL4A complex. Interacts with HNF4A. Interacts with PSMD2 in a KDM8-dependent manner. Interacts with KDM8 in a FBXL3-dependent manner. Interacts with PPARG in a ligand-dependent manner. Interacts with PPARD (via domain NR LBD) and NR1I2 (via domain NR LBD) in a ligand-dependent manner. Interacts with PPARA, NR1I3 and VDR. FAD serves as cofactor. (6R)-5,10-methylene-5,6,7,8-tetrahydrofolate is required as a cofactor. In terms of processing, phosphorylation on Ser-247 by MAPK is important for the inhibition of CLOCK-BMAL1-mediated transcriptional activity. Phosphorylation by CSNK1E requires interaction with PER1 or PER2. Phosphorylation at Ser-71 and Ser-280 by AMPK decreases protein stability. Phosphorylation at Ser-570 exhibits a robust circadian rhythm with a peak at CT8, increases protein stability, prevents SCF(FBXL3)-mediated degradation and is antagonized by interaction with PRKDC. Ubiquitinated by the SCF(FBXL3) and SCF(FBXL21) complexes, regulating the balance between degradation and stabilization. The SCF(FBXL3) complex is mainly nuclear and mediates ubiquitination and subsequent degradation of CRY1. In contrast, cytoplasmic SCF(FBXL21) complex-mediated ubiquitination leads to stabilize CRY1 and counteract the activity of the SCF(FBXL3) complex. The SCF(FBXL3) and SCF(FBXL21) complexes probably mediate ubiquitination at different Lys residues. Ubiquitination at Lys-11 and Lys-107 are specifically ubiquitinated by the SCF(FBXL21) complex but not by the SCF(FBXL3) complex. Ubiquitination may be inhibited by PER2. Deubiquitinated by USP7. Post-translationally, undergoes autophagy-mediated degradation in the liver in a time-dependent manner. Autophagic degradation of CRY1 (an inhibitor of gluconeogenesis) occurs during periods of reduced feeding allowing induction of gluconeogenesis and maintenance of blood glucose levels.

It is found in the cytoplasm. The protein localises to the nucleus. Its function is as follows. Transcriptional repressor which forms a core component of the circadian clock. The circadian clock, an internal time-keeping system, regulates various physiological processes through the generation of approximately 24 hour circadian rhythms in gene expression, which are translated into rhythms in metabolism and behavior. It is derived from the Latin roots 'circa' (about) and 'diem' (day) and acts as an important regulator of a wide array of physiological functions including metabolism, sleep, body temperature, blood pressure, endocrine, immune, cardiovascular, and renal function. Consists of two major components: the central clock, residing in the suprachiasmatic nucleus (SCN) of the brain, and the peripheral clocks that are present in nearly every tissue and organ system. Both the central and peripheral clocks can be reset by environmental cues, also known as Zeitgebers (German for 'timegivers'). The predominant Zeitgeber for the central clock is light, which is sensed by retina and signals directly to the SCN. The central clock entrains the peripheral clocks through neuronal and hormonal signals, body temperature and feeding-related cues, aligning all clocks with the external light/dark cycle. Circadian rhythms allow an organism to achieve temporal homeostasis with its environment at the molecular level by regulating gene expression to create a peak of protein expression once every 24 hours to control when a particular physiological process is most active with respect to the solar day. Transcription and translation of core clock components (CLOCK, NPAS2, BMAL1, BMAL2, PER1, PER2, PER3, CRY1 and CRY2) plays a critical role in rhythm generation, whereas delays imposed by post-translational modifications (PTMs) are important for determining the period (tau) of the rhythms (tau refers to the period of a rhythm and is the length, in time, of one complete cycle). A diurnal rhythm is synchronized with the day/night cycle, while the ultradian and infradian rhythms have a period shorter and longer than 24 hours, respectively. Disruptions in the circadian rhythms contribute to the pathology of cardiovascular diseases, cancer, metabolic syndromes and aging. A transcription/translation feedback loop (TTFL) forms the core of the molecular circadian clock mechanism. Transcription factors, CLOCK or NPAS2 and BMAL1 or BMAL2, form the positive limb of the feedback loop, act in the form of a heterodimer and activate the transcription of core clock genes and clock-controlled genes (involved in key metabolic processes), harboring E-box elements (5'-CACGTG-3') within their promoters. The core clock genes: PER1/2/3 and CRY1/2 which are transcriptional repressors form the negative limb of the feedback loop and interact with the CLOCK|NPAS2-BMAL1|BMAL2 heterodimer inhibiting its activity and thereby negatively regulating their own expression. This heterodimer also activates nuclear receptors NR1D1/2 and RORA/B/G, which form a second feedback loop and which activate and repress BMAL1 transcription, respectively. CRY1 and CRY2 have redundant functions but also differential and selective contributions at least in defining the pace of the SCN circadian clock and its circadian transcriptional outputs. More potent transcriptional repressor in cerebellum and liver than CRY2, though more effective in lengthening the period of the SCN oscillator. On its side, CRY2 seems to play a critical role in tuning SCN circadian period by opposing the action of CRY1. With CRY2, is dispensable for circadian rhythm generation but necessary for the development of intercellular networks for rhythm synchrony. Capable of translocating circadian clock core proteins such as PER proteins to the nucleus. Interacts with CLOCK-BMAL1 independently of PER proteins and is found at CLOCK-BMAL1-bound sites, suggesting that CRY may act as a molecular gatekeeper to maintain CLOCK-BMAL1 in a poised and repressed state until the proper time for transcriptional activation. Represses the CLOCK-BMAL1 induced transcription of BHLHE40/DEC1, ATF4, MTA1, KLF10 and NAMPT. May repress circadian target genes expression in collaboration with HDAC1 and HDAC2 through histone deacetylation. Mediates the clock-control activation of ATR and modulates ATR-mediated DNA damage checkpoint. In liver, mediates circadian regulation of cAMP signaling and gluconeogenesis by binding to membrane-coupled G proteins and blocking glucagon-mediated increases in intracellular cAMP concentrations and CREB1 phosphorylation. Inhibits hepatic gluconeogenesis by decreasing nuclear FOXO1 levels that down-regulates gluconeogenic gene expression. Besides its role in the maintenance of the circadian clock, is also involved in the regulation of other processes. Represses glucocorticoid receptor NR3C1/GR-induced transcriptional activity by binding to glucocorticoid response elements (GREs). Plays a key role in glucose and lipid metabolism modulation, in part, through the transcriptional regulation of genes involved in these pathways, such as LEP or ACSL4. Represses PPARD and its target genes in the skeletal muscle and limits exercise capacity. Plays an essential role in the generation of circadian rhythms in the retina. Represses the transcriptional activity of NR1I2. The chain is Cryptochrome-1 (Cry1) from Rattus norvegicus (Rat).